We begin with the raw amino-acid sequence, 212 residues long: Large ribosomal subunit protein uL3 (212 aa).

The span at 139 to 153 (LSHRVTGSIGQNQTP) shows a compositional bias: polar residues. Residues 139 to 161 (LSHRVTGSIGQNQTPGKVFKGKK) form a disordered region. Q151 carries the post-translational modification N5-methylglutamine.

It belongs to the universal ribosomal protein uL3 family. Part of the 50S ribosomal subunit. Forms a cluster with proteins L14 and L19. In terms of processing, methylated by PrmB.

In terms of biological role, one of the primary rRNA binding proteins, it binds directly near the 3'-end of the 23S rRNA, where it nucleates assembly of the 50S subunit. This chain is Large ribosomal subunit protein uL3, found in Baumannia cicadellinicola subsp. Homalodisca coagulata.